Consider the following 464-residue polypeptide: Siroheme synthase (464 aa).

The interval 1–203 is precorrin-2 dehydrogenase /sirohydrochlorin ferrochelatase; the sequence is MEYLPLFHNL…GQGAEAERLL (203 aa). Residues 22 to 23 and 43 to 44 contribute to the NAD(+) site; these read EI and PE. At Ser-128 the chain carries Phosphoserine. Residues 216-464 form a uroporphyrinogen-III C-methyltransferase region; sequence GEVYLVGAGP…AWFEGAQSEV (249 aa). An S-adenosyl-L-methionine-binding site is contributed by Pro-225. Asp-248 acts as the Proton acceptor in catalysis. The active-site Proton donor is the Lys-270. S-adenosyl-L-methionine contacts are provided by residues 301-303, Ile-306, 331-332, Met-383, and Gly-412; these read GGD and TA.

It in the N-terminal section; belongs to the precorrin-2 dehydrogenase / sirohydrochlorin ferrochelatase family. This sequence in the C-terminal section; belongs to the precorrin methyltransferase family.

It catalyses the reaction uroporphyrinogen III + 2 S-adenosyl-L-methionine = precorrin-2 + 2 S-adenosyl-L-homocysteine + H(+). The catalysed reaction is precorrin-2 + NAD(+) = sirohydrochlorin + NADH + 2 H(+). The enzyme catalyses siroheme + 2 H(+) = sirohydrochlorin + Fe(2+). It functions in the pathway cofactor biosynthesis; adenosylcobalamin biosynthesis; precorrin-2 from uroporphyrinogen III: step 1/1. Its pathway is cofactor biosynthesis; adenosylcobalamin biosynthesis; sirohydrochlorin from precorrin-2: step 1/1. It participates in porphyrin-containing compound metabolism; siroheme biosynthesis; precorrin-2 from uroporphyrinogen III: step 1/1. The protein operates within porphyrin-containing compound metabolism; siroheme biosynthesis; siroheme from sirohydrochlorin: step 1/1. It functions in the pathway porphyrin-containing compound metabolism; siroheme biosynthesis; sirohydrochlorin from precorrin-2: step 1/1. Its function is as follows. Multifunctional enzyme that catalyzes the SAM-dependent methylations of uroporphyrinogen III at position C-2 and C-7 to form precorrin-2 via precorrin-1. Then it catalyzes the NAD-dependent ring dehydrogenation of precorrin-2 to yield sirohydrochlorin. Finally, it catalyzes the ferrochelation of sirohydrochlorin to yield siroheme. The chain is Siroheme synthase from Pseudomonas fluorescens (strain ATCC BAA-477 / NRRL B-23932 / Pf-5).